A 369-amino-acid chain; its full sequence is Flagellar P-ring protein (369 aa).

The N-terminal stretch at 1–22 (MFNARRLIAATLLMSCAFGAHA) is a signal peptide.

Belongs to the FlgI family. In terms of assembly, the basal body constitutes a major portion of the flagellar organelle and consists of four rings (L,P,S, and M) mounted on a central rod.

The protein localises to the periplasm. It localises to the bacterial flagellum basal body. Its function is as follows. Assembles around the rod to form the L-ring and probably protects the motor/basal body from shearing forces during rotation. This is Flagellar P-ring protein from Pseudomonas entomophila (strain L48).